The sequence spans 127 residues: UPF0166 protein PH1503 (127 aa).

This sequence belongs to the UPF0166 family.

This Pyrococcus horikoshii (strain ATCC 700860 / DSM 12428 / JCM 9974 / NBRC 100139 / OT-3) protein is UPF0166 protein PH1503.